Consider the following 305-residue polypeptide: RxLR effector protein PexRD25 (305 aa).

Residues Met1–Ala16 form the signal peptide. The RxLR-dEER signature appears at Arg44–Arg56.

It belongs to the RxLR effector family.

It localises to the secreted. Its subcellular location is the host nucleus. It is found in the host nucleolus. Effector that enhances P.infestans colonization of Nicotiana benthamiana leaves. The polypeptide is RxLR effector protein PexRD25 (Phytophthora infestans (strain T30-4) (Potato late blight agent)).